A 121-amino-acid polypeptide reads, in one-letter code: Large ribosomal subunit protein uL14 (121 aa).

It belongs to the universal ribosomal protein uL14 family. As to quaternary structure, part of the 50S ribosomal subunit. Forms a cluster with proteins L3 and L19. In the 70S ribosome, L14 and L19 interact and together make contacts with the 16S rRNA in bridges B5 and B8.

In terms of biological role, binds to 23S rRNA. Forms part of two intersubunit bridges in the 70S ribosome. The protein is Large ribosomal subunit protein uL14 of Opitutus terrae (strain DSM 11246 / JCM 15787 / PB90-1).